The primary structure comprises 478 residues: MSVKIGEISYKERIDKGIDNDFMRQAVSSAQGRFRKGRLSQAEELGNWEDWRQLGSEIRTHTLENIDYYLHQLSEQVEKRGGNVFFAQTAEEANEYIENVVKKKQAKKVVKTKSMVTEEIGLNEALEKSGAEVVESDLGEWILQLDEDPPSHIVTPALHKNRQQIRETFADKRGYDKTDSPEELAAFAREQLRQDFLTADVGITGCNFAIAESGAITLVTNEGNAEMVTSLPDTQITVMGMERLVPTWEDMEVLVSLLTRAAVGQKLTSYITAYTGARLEEEIDGPDDYHLVIVDNGRSKILGTEFQSALHCIRCAACINVCPVYRHVGGHAYNSIYPGPIGAVLTPLLDGYDDHKELPYASSLCAACTEACPVKIPLHEQLIRHREIIVEKEKKSPVSEKIMMKGFAQWASNPAAYKLSTKVARTALKPWTKDEFVENGPGPLKGWTDVRDFPAPGKQSFRAWWSERAKGEKQNGNS.

2 consecutive 4Fe-4S ferredoxin-type domains span residues 303 to 333 (GTEF…GHAY) and 352 to 381 (YDDH…LHEQ). Cysteine 312, cysteine 315, cysteine 318, cysteine 322, cysteine 365, cysteine 368, and cysteine 372 together coordinate [4Fe-4S] cluster.

It belongs to the LutB/YkgF family.

In terms of biological role, is involved in L-lactate degradation and allows cells to grow with lactate as the sole carbon source. Has probably a role as an electron transporter during oxidation of L-lactate. In Oceanobacillus iheyensis (strain DSM 14371 / CIP 107618 / JCM 11309 / KCTC 3954 / HTE831), this protein is Lactate utilization protein B.